A 368-amino-acid polypeptide reads, in one-letter code: Flagellar P-ring protein (368 aa).

The first 22 residues, 1 to 22 (MLIPLARAVLALALLGAGAAHA), serve as a signal peptide directing secretion.

Belongs to the FlgI family. As to quaternary structure, the basal body constitutes a major portion of the flagellar organelle and consists of four rings (L,P,S, and M) mounted on a central rod.

The protein localises to the periplasm. It is found in the bacterial flagellum basal body. Assembles around the rod to form the L-ring and probably protects the motor/basal body from shearing forces during rotation. This is Flagellar P-ring protein from Bordetella bronchiseptica (strain ATCC BAA-588 / NCTC 13252 / RB50) (Alcaligenes bronchisepticus).